A 303-amino-acid chain; its full sequence is ATP synthase gamma chain (303 aa).

The protein belongs to the ATPase gamma chain family. In terms of assembly, F-type ATPases have 2 components, CF(1) - the catalytic core - and CF(0) - the membrane proton channel. CF(1) has five subunits: alpha(3), beta(3), gamma(1), delta(1), epsilon(1). CF(0) has three main subunits: a, b and c.

It is found in the cell membrane. Produces ATP from ADP in the presence of a proton gradient across the membrane. The gamma chain is believed to be important in regulating ATPase activity and the flow of protons through the CF(0) complex. This is ATP synthase gamma chain from Nocardioides sp. (strain ATCC BAA-499 / JS614).